Here is a 526-residue protein sequence, read N- to C-terminus: Outer capsid protein VP5 (526 aa).

Positions 1 to 42 are involved in membrane permeabilization; that stretch reads MGKIIKSLSRFGKKVGNALTSNTAKKIYSTIGKAAERFAESE.

This sequence belongs to the orbivirus VP5 family.

It localises to the virion. Its function is as follows. VP5 protein is one of the two proteins (with VP2) which constitute the virus particle outer capsid. Acts as a membrane permeabilization protein that mediates release of viral particles from endosomal compartments into the cytoplasm. Permeabilization activity is probably negatively regulated by VP2 and is triggered by endosomal degradation of VP2 and exposure to low pH. This chain is Outer capsid protein VP5 (Segment-6), found in Bluetongue virus 11 (isolate USA) (BTV 11).